Here is a 444-residue protein sequence, read N- to C-terminus: Argininosuccinate synthase (444 aa).

ATP contacts are provided by residues alanine 18 to serine 26 and alanine 44. Tyrosine 100 provides a ligand contact to L-citrulline. ATP is bound by residues glycine 130 and threonine 132. L-aspartate-binding residues include threonine 132, asparagine 136, and aspartate 137. Asparagine 136 contacts L-citrulline. Aspartate 137 contacts ATP. Arginine 140 and serine 193 together coordinate L-citrulline. Residue aspartate 195 participates in ATP binding. The L-citrulline site is built by threonine 202, glutamate 204, and glutamate 281.

Belongs to the argininosuccinate synthase family. Type 2 subfamily. As to quaternary structure, homotetramer.

Its subcellular location is the cytoplasm. The enzyme catalyses L-citrulline + L-aspartate + ATP = 2-(N(omega)-L-arginino)succinate + AMP + diphosphate + H(+). It participates in amino-acid biosynthesis; L-arginine biosynthesis; L-arginine from L-ornithine and carbamoyl phosphate: step 2/3. The protein is Argininosuccinate synthase of Haemophilus influenzae (strain PittEE).